Consider the following 1174-residue polypeptide: Male determiner protein Mdmd(II) (1174 aa).

The span at 1-15 (MNATDAESRKPENKP) shows a compositional bias: basic and acidic residues. Disordered stretches follow at residues 1–51 (MNAT…SGQR), 80–109 (KDGS…HPVE), and 136–259 (KQLS…LRRS). A compositionally biased stretch (low complexity) spans 16 to 35 (SSESSSSGSTSGSSDGEVSS). The segment covering 36 to 47 (KTYFKNNKSKVL) has biased composition (polar residues). Residues 80–92 (KDGSNEMLPKEDS) are compositionally biased toward basic and acidic residues. The span at 93-102 (INTNHNYTTD) shows a compositional bias: polar residues. Positions 138–153 (LSAYRSRSRSTRLSYS) are enriched in low complexity. A compositionally biased stretch (basic and acidic residues) spans 183–200 (HGRDSSTTKRSVSRDKDN). Basic residues predominate over residues 201–223 (RLRRRIGSSRSHTRSHSRFRRSE). Positions 235 to 259 (RSQERRHERRRSMSSDYERIALRRS) are enriched in basic and acidic residues. Residues 348–531 (KKYIHGYINK…KVLFQVRRDG (184 aa)) form the MIF4G domain. A compositionally biased stretch (low complexity) spans 597 to 608 (DSDGSFGSGSNS). The segment at 597-616 (DSDGSFGSGSNSETALSDCD) is disordered. Positions 641–757 (ALRRTIYLTL…SWDVLDCIKL (117 aa)) constitute an MI domain. Positions 840–857 (SAPSSSSSSSLSSELSAP) are enriched in low complexity. Disordered stretches follow at residues 840 to 1045 (SAPS…SRTK) and 1095 to 1133 (RKDN…NHSR). Over residues 869–909 (KKKHKGKNKKMTKKKNPSKKKEKTKKIVGKNKIAAKNKTIK) the composition is skewed to basic residues. Positions 910 to 924 (RRTDKDNSSSKDNFL) are enriched in basic and acidic residues. Residues 926 to 957 (SESSSNESISLDSLSSELFAPSSYSSSESSND) show a composition bias toward low complexity. Basic residues predominate over residues 963-1001 (KHKGKNKKMTKKKNPSNKREKTKKKLSKNKKAPNKNTKK). Residues 1010–1020 (SSESSISESKS) show a composition bias toward low complexity. A compositionally biased stretch (basic residues) spans 1034–1045 (RKKRVTSKSRTK). Residues 1095-1118 (RKDNYGNRQNHEISQRHDSEIKRR) show a composition bias toward basic and acidic residues. A compositionally biased stretch (basic residues) spans 1119 to 1130 (REERKKRHHEKN).

Belongs to the CWC22 family. Component of the spliceosome C complex.

The protein resides in the nucleus speckle. In terms of biological role, male determiner protein (M-factor) that controls male somatic sexual differentiation. Acts as a dominant factor that regulates the mRNA splicing of transformer (tra) and doublesex (dsx) transcripts and promotes expression of male splice forms of tra and dsx. Probably acts as a component of the spliceosome C complex required for mRNA splicing factor and exon-junction complex (EJC) assembly. Hinders eIF4AIII from non-specifically binding RNA and escorts it to the splicing machinery to promote EJC assembly on mature mRNAs. This is Male determiner protein Mdmd(II) from Musca domestica (House fly).